The chain runs to 1037 residues: Probable inorganic carbon transporter subunit DabA 2 (1037 aa).

Zn(2+) contacts are provided by cysteine 460, aspartate 462, histidine 719, and cysteine 734.

It belongs to the inorganic carbon transporter (TC 9.A.2) DabA family. Forms a complex with DabB. Zn(2+) serves as cofactor.

The protein resides in the cell inner membrane. Functionally, part of an energy-coupled inorganic carbon pump. This is Probable inorganic carbon transporter subunit DabA 2 from Nitrobacter winogradskyi (strain ATCC 25391 / DSM 10237 / CIP 104748 / NCIMB 11846 / Nb-255).